We begin with the raw amino-acid sequence, 1216 residues long: Metabotropic glycine receptor (1216 aa).

A signal peptide spans 1-23 (MGVMAYPFLFCLLLVHFGLGAIG). The Extracellular portion of the chain corresponds to 24–417 (ASREAPSRPD…CFVQEDKYLR (394 aa)). The tract at residues 25–65 (SREAPSRPDPPRERTLRAKQHAQQPARASASDPSAPWSRST) is disordered. The segment covering 28–40 (APSRPDPPRERTL) has biased composition (basic and acidic residues). The segment covering 46–64 (AQQPARASASDPSAPWSRS) has biased composition (low complexity). A cache-like region region spans residues 85-281 (YLYTGDSHKL…CENGSYKPGW (197 aa)). Residues Asn98 and Asn143 are each glycosylated (N-linked (GlcNAc...) asparagine). Cys99 and Cys272 form a disulfide bridge. Glycine-binding residues include Ser172 and Arg173. N-linked (GlcNAc...) asparagine glycosylation occurs at Asn215. Glu271 is a binding site for glycine. Asn274 is a glycosylation site (N-linked (GlcNAc...) asparagine). Asp307 provides a ligand contact to glycine. An N-linked (GlcNAc...) asparagine glycan is attached at Asn333. The helical transmembrane segment at 418-439 (LAIISFQALCMLLDFLSMLVVY) threads the bilayer. The Cytoplasmic segment spans residues 440 to 451 (RFRKAKSIRASG). Residues 452–474 (LILLETILFGSLLLYFPVVILYF) form a helical membrane-spanning segment. Residues 475 to 478 (EPST) are Extracellular-facing. The helical transmembrane segment at 479–501 (FRCILLRWVRLLGFATVYGTVTL) threads the bilayer. The cysteines at positions 481 and 573 are disulfide-linked. At 502–525 (KLHRVLKVFLSRTAQRIPYMTGGR) the chain is on the cytoplasmic side. A helical membrane pass occupies residues 526 to 547 (VMRMLAVILLVVFWFLVGWTSS). At 548–576 (VCQNLERHISLIGQGRTSDHLIFSMCLVE) the chain is on the extracellular side. Residues 577–597 (RWDYMTAAAEFLFLLWGVYLC) traverse the membrane as a helical segment. Residues 598–611 (YAVRTVPSAFHEPR) lie on the Cytoplasmic side of the membrane. Residues 612 to 633 (YMAVAVHNELIISAIFHTIRFV) traverse the membrane as a helical segment. The Extracellular portion of the chain corresponds to 634 to 642 (LASRLQSDW). A helical transmembrane segment spans residues 643-664 (MLMLYFAHTHLTVTVTIGLLLI). Residues 665 to 1216 (PKFSHSSNNP…NEEVRLARKV (552 aa)) are Cytoplasmic-facing. Ser694, Ser705, and Ser708 each carry phosphoserine. Disordered stretches follow at residues 757-875 (RITE…ESVP) and 911-1000 (KEKT…HMKD). Residues 769–781 (CSKEDKDGGEHGS) are compositionally biased toward basic and acidic residues. Lys774 participates in a covalent cross-link: Glycyl lysine isopeptide (Lys-Gly) (interchain with G-Cter in ubiquitin). Polar residues predominate over residues 864 to 873 (EDSQAVSTES). Ser866 is modified (phosphoserine). The segment covering 926–944 (VEERAKAQKALPRERETNR) has biased composition (basic and acidic residues). Composition is skewed to polar residues over residues 945–963 (KYSNSDNAETQDSAPPNSS) and 980–991 (QRANPTTANSDL). Ser947 bears the Phosphoserine mark. The VCPWE motif 1 motif lies at 1007–1011 (VCPWE). The tract at residues 1038 to 1072 (ERNPTFSLKEKSHPKPKAADLCQQSNPKSVDKAEV) is disordered. Ser1066 is subject to Phosphoserine. The VCPWE motif 2 signature appears at 1072–1076 (VCPWE). Ser1081 carries the phosphoserine modification. The disordered stretch occupies residues 1128-1167 (SKVENENLNQLGEQEKKTSSSERNVPDSHNSSNNFQPPLM). Residues 1140–1153 (EQEKKTSSSERNVP) show a composition bias toward basic and acidic residues. A compositionally biased stretch (polar residues) spans 1154-1163 (DSHNSSNNFQ). Positions 1172 to 1176 (VCPWE) match the VCPWE motif 3 motif.

Belongs to the G-protein coupled receptor 3 family. Homodimer. Associates with the RGS7-GNB5 complex, promoting its localization to the cell membrane and regulating its GTPase activator activity. Interacts (via VCPWE motifs) with GNAO1. Interacts with GPC4. Interacts with EGFLAM.

It is found in the cell membrane. The protein resides in the postsynaptic cell membrane. Its subcellular location is the presynaptic cell membrane. It localises to the nucleus. In terms of biological role, metabotropic receptor for glycine that controls synapse formation and function in the brain. Acts as an atypical G-protein coupled receptor that recruits and regulates the RGS7-GNB5 complex instead of activating G proteins. In absence of glycine ligand, promotes the GTPase activator activity of RGS7, increasing the GTPase activity of G protein alpha subunits, thereby driving them into their inactive GDP-bound form. Glycine-binding changes the conformation of the intracellular surface, inhibiting the GTPase activator activity of the RGS7-GNB5 complex, promoting G protein alpha subunits into their active GTP-bound form and regulating cAMP levels. Also able to bind taurine, a compound closely related to glycine, but with a two-fold lower affinity. Glycine receptor-dependent regulation of cAMP controls key ion channels, kinases and neurotrophic factors involved in neuronal excitability and synaptic transmission. Plays a pivotal role in regulating mood and cognition via its ability to regulate neuronal excitability in L2/L3 pyramidal neurons of the prefrontal cortex. Also involved in spatial learning by regulating hippocampal CA1 neuronal excitability. Acts as a synaptic organizer in the hippocampus, required for proper mossy fiber-CA3 neurocircuitry establishment, structure and function: induces presynaptic differentiation in contacting axons via its interaction with GPC4. In addition to glycine, may also act as a receptor for osteocalcin (BGLAP) hormone: osteocalcin-binding initiates a signaling response that prevents neuronal apoptosis in the hippocampus and regulates the synthesis of neurotransmitters. The chain is Metabotropic glycine receptor (GPR158) from Bos taurus (Bovine).